A 141-amino-acid chain; its full sequence is ATP synthase epsilon chain (141 aa).

Belongs to the ATPase epsilon chain family. In terms of assembly, F-type ATPases have 2 components, CF(1) - the catalytic core - and CF(0) - the membrane proton channel. CF(1) has five subunits: alpha(3), beta(3), gamma(1), delta(1), epsilon(1). CF(0) has three main subunits: a, b and c.

The protein localises to the cell inner membrane. In terms of biological role, produces ATP from ADP in the presence of a proton gradient across the membrane. The protein is ATP synthase epsilon chain of Hahella chejuensis (strain KCTC 2396).